The chain runs to 246 residues: Ribosomal RNA small subunit methyltransferase J (246 aa).

S-adenosyl-L-methionine is bound by residues 115–116 (ER) and aspartate 169.

Belongs to the methyltransferase superfamily. RsmJ family.

The protein localises to the cytoplasm. The catalysed reaction is guanosine(1516) in 16S rRNA + S-adenosyl-L-methionine = N(2)-methylguanosine(1516) in 16S rRNA + S-adenosyl-L-homocysteine + H(+). Its function is as follows. Specifically methylates the guanosine in position 1516 of 16S rRNA. This chain is Ribosomal RNA small subunit methyltransferase J, found in Buchnera aphidicola subsp. Acyrthosiphon pisum (strain Tuc7).